Consider the following 217-residue polypeptide: Small ribosomal subunit protein uS3 (217 aa).

The region spanning 38–106 is the KH type-2 domain; sequence VRKYIETALK…RVHINIIEIK (69 aa).

Belongs to the universal ribosomal protein uS3 family. In terms of assembly, part of the 30S ribosomal subunit. Forms a tight complex with proteins S10 and S14.

Its function is as follows. Binds the lower part of the 30S subunit head. Binds mRNA in the 70S ribosome, positioning it for translation. The chain is Small ribosomal subunit protein uS3 from Lysinibacillus sphaericus (strain C3-41).